The sequence spans 312 residues: tRNA uridine(34) hydroxylase (312 aa).

The Rhodanese domain occupies 147-237 (SDRNVIFIDM…GILGYVHDAN (91 aa)). The Cysteine persulfide intermediate role is filled by Cys-201.

Belongs to the TrhO family.

It carries out the reaction uridine(34) in tRNA + AH2 + O2 = 5-hydroxyuridine(34) in tRNA + A + H2O. Functionally, catalyzes oxygen-dependent 5-hydroxyuridine (ho5U) modification at position 34 in tRNAs. The polypeptide is tRNA uridine(34) hydroxylase (Buchnera aphidicola subsp. Schizaphis graminum (strain Sg)).